A 1033-amino-acid chain; its full sequence is Potassium-transporting ATPase alpha chain 1 (1033 aa).

Over 1–96 the chain is Cytoplasmic; it reads MGKENYELYS…NALRPPRGTP (96 aa). Residues Tyr6 and Tyr9 each carry the phosphotyrosine modification. Residues 14-39 form a disordered region; that stretch reads GTGPGGDMAAKMSKKKAGGGGGKKKE. Residues 25–38 show a composition bias toward basic residues; that stretch reads MSKKKAGGGGGKKK. Ser26 carries the phosphoserine modification. Residues 97 to 117 form a helical membrane-spanning segment; sequence EYVKFARQLAGGLQCLMWVAA. At 118 to 140 the chain is on the lumenal side; sequence AICLIAFAIQASEGDLTTDDNLY. The chain crosses the membrane as a helical span at residues 141-161; that stretch reads LALALIAVVVVTGCFGYYQEF. Topologically, residues 162–297 are cytoplasmic; sequence KSTNIIASFK…NEKTPIAIEI (136 aa). The helical transmembrane segment at 298-317 threads the bilayer; it reads EHFVDIIAGLAILFGATFFV. Residues 318 to 329 are Lumenal-facing; that stretch reads VAMCIGYTFLRA. Residues 330–347 traverse the membrane as a helical segment; it reads MVFFMAIVVAYVPEGLLA. Val338, Ala339, Val341, and Glu343 together coordinate K(+). Residues 348–781 lie on the Cytoplasmic side of the membrane; that stretch reads TVTVCLSLTA…EQGRLIFDNL (434 aa). Residue Asp385 is the 4-aspartylphosphate intermediate of the active site. Residues Asp385 and Thr387 each contribute to the Mg(2+) site. Phosphoserine is present on residues Ser461 and Ser599. The Mg(2+) site is built by Asp726 and Asp730. Residues 782-801 form a helical membrane-spanning segment; the sequence is KKSIAYTLTKNIPELTPYLI. K(+) is bound at residue Glu795. The Lumenal portion of the chain corresponds to 802-811; that stretch reads YITVSVPLPL. Residues 812 to 832 form a helical membrane-spanning segment; that stretch reads GCITILFIELCTDIFPSVSLA. Glu820 contributes to the K(+) binding site. Over 833–852 the chain is Cytoplasmic; that stretch reads YEKAESDIMHLRPRNPRRDR. Ser838 bears the Phosphoserine mark. A helical transmembrane segment spans residues 853–875; it reads LVNEPLAAYSYFQIGAIQSFAGF. At 876 to 927 the chain is on the lumenal side; sequence ADYFTAMAQEGWFPLLCVGLRPQWEDHHLQDLQDSYGQEWTFGQRLYQQYTC. The helical transmembrane segment at 928 to 947 threads the bilayer; it reads YTVFFISIEMCQIADVLIRK. Residues 948–961 are Cytoplasmic-facing; sequence TRRLSAFQQGFFRN. A Phosphoserine; by PKA modification is found at Ser952. The chain crosses the membrane as a helical span at residues 962–980; sequence RILVIAIVFQVCIGCFLCY. Residues 981–995 lie on the Lumenal side of the membrane; it reads CPGMPNIFNFMPIRF. Residues 996–1016 traverse the membrane as a helical segment; sequence QWWLVPMPFGLLIFVYDEIRK. Residues 1017–1033 lie on the Cytoplasmic side of the membrane; it reads LGVRCCPGSWWDQELYY.

This sequence belongs to the cation transport ATPase (P-type) (TC 3.A.3) family. Type IIC subfamily. As to quaternary structure, the gastric H(+)/K(+) ATPase pump is composed of the catalytic alpha subunit ATP4A and the regulatory beta subunit ATP4B. Interacts (via the P-domain) with ATP4B (via N-terminus); this interaction stabilizes the lumenal-open E2 conformation state and prevents the reverse reaction of the transport cycle.

The protein localises to the apical cell membrane. It catalyses the reaction K(+)(out) + ATP + H2O + H(+)(in) = K(+)(in) + ADP + phosphate + 2 H(+)(out). The catalytic subunit of the gastric H(+)/K(+) ATPase pump which transports H(+) ions in exchange for K(+) ions across the apical membrane of parietal cells. Uses ATP as an energy source to pump H(+) ions to the gastric lumen while transporting K(+) ion from the lumen into the cell. Remarkably generates a million-fold proton gradient across the gastric parietal cell membrane, acidifying the gastric juice down to pH 1. Within a transport cycle, the transfer of a H(+) ion across the membrane is coupled to ATP hydrolysis and is associated with a transient phosphorylation that shifts the pump conformation from inward-facing (E1) to outward-facing state (E2). The release of the H(+) ion in the stomach lumen is followed by binding of K(+) ion converting the pump conformation back to the E1 state. This is Potassium-transporting ATPase alpha chain 1 (Atp4a) from Rattus norvegicus (Rat).